We begin with the raw amino-acid sequence, 233 residues long: Large ribosomal subunit protein uL1 (233 aa).

Belongs to the universal ribosomal protein uL1 family. Part of the 50S ribosomal subunit.

Binds directly to 23S rRNA. The L1 stalk is quite mobile in the ribosome, and is involved in E site tRNA release. Functionally, protein L1 is also a translational repressor protein, it controls the translation of the L11 operon by binding to its mRNA. In Polynucleobacter necessarius subsp. necessarius (strain STIR1), this protein is Large ribosomal subunit protein uL1.